Reading from the N-terminus, the 246-residue chain is Pyridoxine 5'-phosphate synthase (246 aa).

Position 12 (asparagine 12) interacts with 3-amino-2-oxopropyl phosphate. 14 to 15 is a binding site for 1-deoxy-D-xylulose 5-phosphate; the sequence is DH. Arginine 23 serves as a coordination point for 3-amino-2-oxopropyl phosphate. Catalysis depends on histidine 48, which acts as the Proton acceptor. Residues arginine 50 and histidine 55 each coordinate 1-deoxy-D-xylulose 5-phosphate. The Proton acceptor role is filled by glutamate 75. Threonine 105 lines the 1-deoxy-D-xylulose 5-phosphate pocket. Histidine 196 (proton donor) is an active-site residue. 3-amino-2-oxopropyl phosphate contacts are provided by residues glycine 197 and 218 to 219; that span reads GH.

It belongs to the PNP synthase family. In terms of assembly, homooctamer; tetramer of dimers.

Its subcellular location is the cytoplasm. The catalysed reaction is 3-amino-2-oxopropyl phosphate + 1-deoxy-D-xylulose 5-phosphate = pyridoxine 5'-phosphate + phosphate + 2 H2O + H(+). It functions in the pathway cofactor biosynthesis; pyridoxine 5'-phosphate biosynthesis; pyridoxine 5'-phosphate from D-erythrose 4-phosphate: step 5/5. In terms of biological role, catalyzes the complicated ring closure reaction between the two acyclic compounds 1-deoxy-D-xylulose-5-phosphate (DXP) and 3-amino-2-oxopropyl phosphate (1-amino-acetone-3-phosphate or AAP) to form pyridoxine 5'-phosphate (PNP) and inorganic phosphate. The chain is Pyridoxine 5'-phosphate synthase from Thiobacillus denitrificans (strain ATCC 25259 / T1).